Reading from the N-terminus, the 300-residue chain is Regulatory protein NocR (300 aa).

Positions 1 to 59 (MIQSRQLEAFRPVMLTGGMTSAANLVRITQPAISRLIRDLEEEIGISLFERTGNRLRPT) constitute an HTH lysR-type domain. Residues 19–38 (MTSAANLVRITQPAISRLIR) constitute a DNA-binding region (H-T-H motif).

The protein belongs to the LysR transcriptional regulatory family.

Functionally, positive regulatory protein for the noc operon involved in nopaline catabolism and uptake. The polypeptide is Regulatory protein NocR (nocR) (Agrobacterium tumefaciens (strain T37)).